The primary structure comprises 170 residues: 4-hydroxyphenylacetate 3-monooxygenase reductase component (170 aa).

This sequence belongs to the non-flavoprotein flavin reductase family. HpaC subfamily. Monomer. HPA 3-hydroxylase consists of a reductase component HpaC and an oxygenase component HpaB. Some form of interactions between the reductase and the oxygenase facilitate the transfer of FADH(-) to the oxygenase in P.aeruginosa, although interactions are not required in other species.

It catalyses the reaction FADH2 + NAD(+) = FAD + NADH + 2 H(+). It functions in the pathway aromatic compound metabolism; 4-hydroxyphenylacetate degradation; pyruvate and succinate semialdehyde from 4-hydroxyphenylacetate: step 1/7. Its activity is regulated as follows. The rate of FAD reduction is independent of the presence of HPA, demonstrating that, in contrast to HPAH from A.baumannii, the activity of the HPAH reductase is not allosterically regulated by the substrate. Reductase component of the 4-hydroxyphenylacetate (HPA) 3-hydroxylase. Catalyzes the reduction of FAD by NADH. The reduced flavin is then transferred to the oxygenase component HpaB. Is also able to reduce FMN and riboflavin, but preferentially binds FAD. Has no activity with NADPH as the reductant. This Pseudomonas aeruginosa (strain ATCC 15692 / DSM 22644 / CIP 104116 / JCM 14847 / LMG 12228 / 1C / PRS 101 / PAO1) protein is 4-hydroxyphenylacetate 3-monooxygenase reductase component.